Consider the following 478-residue polypeptide: Poly(A) RNA polymerase cid11 (478 aa).

Mg(2+) contacts are provided by D106 and D108. One can recognise a PAP-associated domain in the interval 263-317 (SLGRLLIDFFYYYGFSFNYLDSVVSVRSGTVLNKQEKGWAMEVNNSLCVEEPFNT). The tract at residues 428–447 (QSYENKANRDSDFQGQTSLT) is disordered.

This sequence belongs to the DNA polymerase type-B-like family. Requires Mg(2+) as cofactor. Mn(2+) serves as cofactor.

Its subcellular location is the cytoplasm. It localises to the nucleus. It carries out the reaction RNA(n) + ATP = RNA(n)-3'-adenine ribonucleotide + diphosphate. The protein is Poly(A) RNA polymerase cid11 (cid11) of Schizosaccharomyces pombe (strain 972 / ATCC 24843) (Fission yeast).